A 160-amino-acid chain; its full sequence is MKSLQKGFTLIELMIVVAIIGILAAFAIPAYNDYIARSQAAEGVSLADGLKVRIAENLQDGECKGPDADPASGVVGNQDKGKYALAEIKGDYDASKTDAGDPNGCQVEITYGQGTAEGKISKLITGKKLVLEQLVNGSFIAGAGTDLADKFIPNAVKVKK.

A propeptide spans Met1 to Gly7 (leader sequence). The residue at position 8 (Phe8) is an N-methylphenylalanine. Residues Phe8–Ile28 traverse the membrane as a helical segment.

It belongs to the N-Me-Phe pilin family. As to quaternary structure, the pili are polar flexible filaments of about 5.4 nanometers diameter and 2.5 micrometers average length; they consist of only a single polypeptide chain arranged in a helical configuration of five subunits per turn in the assembled pilus.

Its subcellular location is the fimbrium. It localises to the membrane. This is Fimbrial protein (fimA) from Dichelobacter nodosus (Bacteroides nodosus).